The following is a 1166-amino-acid chain: MANGGGGGGGGGGGSSLRMSSNIHANHLSLDASSSSSSSSSSSSSSSSVHEPKMDALIIPVTMEVPCDSRGQRMWWAFLASSMVTFFGGLFIILLWRTLKYLWTVCCHCGGKTKEAQKINNGSSQADGTLKPVDEKEETVAAEVGWMTSVKDWAGVMISAQTLTGRVLVVLVFALSIGALVIYFIDSSNPIESCQNFYKDFTLQIDMAFNVFFLLYFGLRFIAANDKLWFWLEVNSVVDFFTVPPVFVSVYLNRSWLGLRFLRALRLIQFSEILQFLNILKTSNSIKLVNLLSIFISTWLTAAGFIHLVENSGDPWENFQNNQALTYWECVYLLMVTMSTVGYGDVYAKTTLGRLFMVFFILGGLAMFASYVPEIIELIGNRKKYGGSYSAVSGRKHIVVCGHITLESVSNFLKDFLHKDRDDVNVEIVFLHNISPNLELEALFKRHFTQVEFYQGSVLNPHDLARVKIESADACLILANKYCADPDAEDASNIMRVISIKNYHPKIRIITQMLQYHNKAHLLNIPSWNWKEGDDAICLAELKLGFIAQSCLAQGLSTMLANLFSMRSFIKIEEDTWQKYYLEGVSNEMYTEYLSSAFVGLSFPTVCELCFVKLKLLMIAIEYKSANRESRILINPGNHLKIQEGTLGFFIASDAKEVKRAFFYCKACHDDITDPKRIKKCGCKRLEDEQPSTLSPKKKQRNGGMRNSPSSSPKLMRHDPLLIPGNDQIDNMDSNVKKYDSTGMFHWCAPKEIEKVILTRSEAAMTVLSGHVVVCIFGDVSSALIGLRNLVMPLRASNFHYHELKHIVFVGSIEYLKREWETLHNFPKVSILPGTPLSRADLRAVNINLCDMCVILSANQNNIDDTSLQDKECILASLNIKSMQFDDSIGVLQANSQGFTPPGMDRSSPDNSPVHGMLRQPSITTGVNIPIITELVNDTNVQFLDQDDDDDPDTELYLTQPFACGTAFAVSVLDSLMSATYFNDNILTLIRTLVTGGATPELEALIAEENALRGGYSTPQTLANRDRCRVAQLALLDGPFADLGDGGCYGDLFCKALKTYNMLCFGIYRLRDAHLSTPSQCTKRYVITNPPYEFELVPTDLIFCLMQFDHNAGQSRASLSHSSHSSQSSSKKSSSVHSIPSTANRQNRPKSRESRDKQKYVQEERL.

Over residues 1–15 (MANGGGGGGGGGGGS) the composition is skewed to gly residues. 2 disordered regions span residues 1–20 (MANG…LRMS) and 30–51 (LDAS…SVHE). Residues 1–74 (MANGGGGGGG…VPCDSRGQRM (74 aa)) lie on the Extracellular side of the membrane. The segment covering 33 to 48 (SSSSSSSSSSSSSSSS) has biased composition (low complexity). The helical transmembrane segment at 75 to 95 (WWAFLASSMVTFFGGLFIILL) threads the bilayer. Over 96-166 (WRTLKYLWTV…MISAQTLTGR (71 aa)) the chain is Cytoplasmic. 3 S-palmitoyl cysteine lipidation sites follow: Cys106, Cys107, and Cys109. Thr139 is subject to Phosphothreonine; by CamK2. Residues 167-187 (VLVVLVFALSIGALVIYFIDS) traverse the membrane as a helical segment. Residues 188–202 (SNPIESCQNFYKDFT) are Extracellular-facing. A helical membrane pass occupies residues 203–223 (LQIDMAFNVFFLLYFGLRFIA). The Cytoplasmic portion of the chain corresponds to 224-227 (ANDK). The chain crosses the membrane as a helical span at residues 228 to 248 (LWFWLEVNSVVDFFTVPPVFV). Residues 249-252 (SVYL) are Extracellular-facing. The chain crosses the membrane as a helical; Voltage-sensor span at residues 253–273 (NRSWLGLRFLRALRLIQFSEI). Over 274–288 (LQFLNILKTSNSIKL) the chain is Cytoplasmic. A helical membrane pass occupies residues 289 to 309 (VNLLSIFISTWLTAAGFIHLV). Over 310–323 (ENSGDPWENFQNNQ) the chain is Extracellular. The pore-forming intramembrane region spans 324–346 (ALTYWECVYLLMVTMSTVGYGDV). A Selectivity for potassium motif is present at residues 340 to 343 (TVGY). Residues 347 to 355 (YAKTTLGRL) lie on the Extracellular side of the membrane. A helical transmembrane segment spans residues 356–376 (FMVFFILGGLAMFASYVPEII). Residues 377-1166 (ELIGNRKKYG…KQKYVQEERL (790 aa)) are Cytoplasmic-facing. In terms of domain architecture, RCK N-terminal 1 spans 395–537 (RKHIVVCGHI…WNWKEGDDAI (143 aa)). Residues Glu427, Gln450, and Glu452 each contribute to the Mg(2+) site. Positions 544–564 (LGFIAQSCLAQGLSTMLANLF) are segment S7. The tract at residues 601–621 (LSFPTVCELCFVKLKLLMIAI) is segment S8. The tract at residues 665–669 (CKACH) is heme-binding motif. The interval 689-717 (EQPSTLSPKKKQRNGGMRNSPSSSPKLMR) is disordered. Thr693 carries the phosphothreonine modification. 3 positions are modified to phosphoserine: Ser695, Ser708, and Ser712. Residues 767-787 (VLSGHVVVCIFGDVSSALIGL) form a segment S9 region. Residues 769-913 (SGHVVVCIFG…MDRSSPDNSP (145 aa)) form the RCK N-terminal 2 domain. Thr900 carries the post-translational modification Phosphothreonine. Ser908 and Ser912 each carry phosphoserine. Residues 933-955 (TELVNDTNVQFLDQDDDDDPDTE) carry the Calcium bowl motif. Ca(2+) is bound by residues Gln942, Asp945, Asp948, and Asp950. Positions 962-982 (FACGTAFAVSVLDSLMSATYF) are segment S10. Low complexity predominate over residues 1116-1141 (RASLSHSSHSSQSSSKKSSSVHSIPS). The segment at 1116-1166 (RASLSHSSHSSQSSSKKSSSVHSIPSTANRQNRPKSRESRDKQKYVQEERL) is disordered. Positions 1150–1166 (KSRESRDKQKYVQEERL) are enriched in basic and acidic residues. 2 positions are modified to phosphoserine; by PKG: Ser1151 and Ser1154.

It belongs to the potassium channel family. Calcium-activated (TC 1.A.1.3) subfamily. KCa1.1/KCNMA1 sub-subfamily. In terms of assembly, homotetramer; which constitutes the calcium-activated potassium channel. Interacts with beta subunits KCNMB1, KCNMB2, KCNMB3 and KCNMB4. Interacts with gamma subunits LRRC26, LRRC38, LRRC52 and LRRC55. Beta and gamma subunits are accessory, and modulate its activity. Interacts with RAB11B. In terms of processing, phosphorylated. Stimulated by PKG, but not by PKA. In smooth muscles, phosphorylation affects its activity. Phosphorylated. Exclusively stimulated by PKA. In smooth muscles, phosphorylation affects its activity. Post-translationally, incremental phosphorylation of Thr-139 of the KCNMA1 tetramer changes the response to ethanol from increased activation to inhibition of channel activity. In terms of processing, palmitoylation by ZDHHC22 and ZDHHC23 within the intracellular linker between the S0 and S1 transmembrane domains regulates localization to the plasma membrane. Depalmitoylated by LYPLA1 and LYPLAL1, leading to retard exit from the trans-Golgi network.

The protein resides in the cell membrane. The catalysed reaction is K(+)(in) = K(+)(out). With respect to regulation, ethanol and carbon monoxide-bound heme increase channel activation. Heme inhibits channel activation. Phosphorylation of Thr-139 leads to inhibition of channel activity by ethanol. Its function is as follows. Potassium channel activated by both membrane depolarization or increase in cytosolic Ca(2+) that mediates export of K(+). It is also activated by concentration of cytosolic Mg(2+). Its activation dampens the excitatory events that elevate the cytosolic Ca(2+) concentration and/or depolarize the cell membrane. It therefore contributes to repolarization of the membrane potential. Plays a key role in controlling excitability in a number of systems, such as regulation of the contraction of smooth muscle, the tuning of hair cells in the cochlea, regulation of transmitter release, and innate immunity. In smooth muscles, its activation by high level of Ca(2+), caused by ryanodine receptors in the sarcoplasmic reticulum, regulates the membrane potential. In cochlea cells, its number and kinetic properties partly determine the characteristic frequency of each hair cell and thereby helps to establish a tonotopic map. Kinetics of KCNMA1 channels are determined by alternative splicing, phosphorylation status and its combination with modulating beta subunits. Highly sensitive to both iberiotoxin (IbTx) and charybdotoxin (CTX). The sequence is that of Calcium-activated potassium channel subunit alpha-1 (KCNMA1) from Bos taurus (Bovine).